We begin with the raw amino-acid sequence, 388 residues long: Succinyl-diaminopimelate desuccinylase (388 aa).

His-84 serves as a coordination point for Zn(2+). The active site involves Asp-86. Asp-115 contributes to the Zn(2+) binding site. The active-site Proton acceptor is Glu-146. 3 residues coordinate Zn(2+): Glu-147, Glu-175, and His-360.

Belongs to the peptidase M20A family. DapE subfamily. As to quaternary structure, homodimer. Requires Zn(2+) as cofactor. The cofactor is Co(2+).

The enzyme catalyses N-succinyl-(2S,6S)-2,6-diaminopimelate + H2O = (2S,6S)-2,6-diaminopimelate + succinate. The protein operates within amino-acid biosynthesis; L-lysine biosynthesis via DAP pathway; LL-2,6-diaminopimelate from (S)-tetrahydrodipicolinate (succinylase route): step 3/3. Its function is as follows. Catalyzes the hydrolysis of N-succinyl-L,L-diaminopimelic acid (SDAP), forming succinate and LL-2,6-diaminopimelate (DAP), an intermediate involved in the bacterial biosynthesis of lysine and meso-diaminopimelic acid, an essential component of bacterial cell walls. This is Succinyl-diaminopimelate desuccinylase from Helicobacter pylori (strain G27).